We begin with the raw amino-acid sequence, 168 residues long: G/U mismatch-specific DNA glycosylase (168 aa).

It belongs to the uracil-DNA glycosylase (UDG) superfamily. TDG/mug family. As to quaternary structure, binds DNA as a monomer.

The protein localises to the cytoplasm. It carries out the reaction Specifically hydrolyzes mismatched double-stranded DNA and polynucleotides, releasing free uracil.. Its function is as follows. Excises ethenocytosine and uracil, which can arise by alkylation or deamination of cytosine, respectively, from the corresponding mispairs with guanine in ds-DNA. It is capable of hydrolyzing the carbon-nitrogen bond between the sugar-phosphate backbone of the DNA and the mispaired base. The complementary strand guanine functions in substrate recognition. Required for DNA damage lesion repair in stationary-phase cells. The protein is G/U mismatch-specific DNA glycosylase of Salmonella gallinarum (strain 287/91 / NCTC 13346).